The primary structure comprises 219 residues: PKHD-type hydroxylase SYNPCC7002_A2658 (219 aa).

Residues 78 to 172 (TVHTLLFSRY…RLVAVGWVQS (95 aa)) form the Fe2OG dioxygenase domain. Residues H96, D98, and H153 each contribute to the Fe cation site. Residue R163 participates in 2-oxoglutarate binding.

Fe(2+) serves as cofactor. It depends on L-ascorbate as a cofactor.

The chain is PKHD-type hydroxylase SYNPCC7002_A2658 from Picosynechococcus sp. (strain ATCC 27264 / PCC 7002 / PR-6) (Agmenellum quadruplicatum).